Reading from the N-terminus, the 775-residue chain is ADP-ribosylation factor GTPase-activating protein AGD4 (775 aa).

Residues 2 to 226 (ATFINLEDSP…IHQILTYAQQ (225 aa)) enclose the BAR domain. One can recognise a PH domain in the interval 288 to 421 (EVIKQGYLLK…WVNKITKAIG (134 aa)). Positions 467–603 (DDVSTILRGL…ALVIKDESEA (137 aa)) constitute an Arf-GAP domain. The C4-type zinc-finger motif lies at 482 to 505 (CAECNAPEPDWASLNLGVLLCIQC). ANK repeat units lie at residues 682-711 (QGCS…DLNI) and 715-744 (HGRT…RPSI).

As to expression, expressed in roots, hypocotyls, cotyledons, leaf and shoot apical meristems and siliques.

Its function is as follows. Probable GTPase-activating protein. This is ADP-ribosylation factor GTPase-activating protein AGD4 (AGD4) from Arabidopsis thaliana (Mouse-ear cress).